The chain runs to 147 residues: Large ribosomal subunit protein uL15 (147 aa).

A disordered region spans residues 1 to 46 (MSIRLENLSYTPGARKEKHRKGRGHAAGKGKQAGRGQSGQKKRSTV). The segment covering 16–28 (KEKHRKGRGHAAG) has biased composition (basic residues).

This sequence belongs to the universal ribosomal protein uL15 family. In terms of assembly, part of the 50S ribosomal subunit.

In terms of biological role, binds to the 23S rRNA. The polypeptide is Large ribosomal subunit protein uL15 (Mesomycoplasma hyopneumoniae (strain J / ATCC 25934 / NCTC 10110) (Mycoplasma hyopneumoniae)).